Reading from the N-terminus, the 209-residue chain is dTTP/UTP pyrophosphatase (209 aa).

Catalysis depends on Asp79, which acts as the Proton acceptor.

This sequence belongs to the Maf family. YhdE subfamily. A divalent metal cation serves as cofactor.

It localises to the cytoplasm. It catalyses the reaction dTTP + H2O = dTMP + diphosphate + H(+). The enzyme catalyses UTP + H2O = UMP + diphosphate + H(+). Functionally, nucleoside triphosphate pyrophosphatase that hydrolyzes dTTP and UTP. May have a dual role in cell division arrest and in preventing the incorporation of modified nucleotides into cellular nucleic acids. This is dTTP/UTP pyrophosphatase from Bradyrhizobium diazoefficiens (strain JCM 10833 / BCRC 13528 / IAM 13628 / NBRC 14792 / USDA 110).